Consider the following 117-residue polypeptide: Large ribosomal subunit protein uL18 (117 aa).

It belongs to the universal ribosomal protein uL18 family. In terms of assembly, part of the 50S ribosomal subunit; part of the 5S rRNA/L5/L18/L25 subcomplex. Contacts the 5S and 23S rRNAs.

Functionally, this is one of the proteins that bind and probably mediate the attachment of the 5S RNA into the large ribosomal subunit, where it forms part of the central protuberance. In Nitrosococcus oceani (strain ATCC 19707 / BCRC 17464 / JCM 30415 / NCIMB 11848 / C-107), this protein is Large ribosomal subunit protein uL18.